A 109-amino-acid polypeptide reads, in one-letter code: Tyrosine-protein phosphatase 16 (109 aa).

The region spanning 1-109 (WRMVTEHTST…RIKTQKPIVV (109 aa)) is the Tyrosine-protein phosphatase domain. Aspartate 81 provides a ligand contact to substrate.

The protein belongs to the protein-tyrosine phosphatase family.

It carries out the reaction O-phospho-L-tyrosyl-[protein] + H2O = L-tyrosyl-[protein] + phosphate. This chain is Tyrosine-protein phosphatase 16 (STY-16), found in Styela plicata (Wrinkled sea squirt).